The chain runs to 406 residues: LIM/homeobox protein Lhx2 (406 aa).

LIM zinc-binding domains lie at 53–105 and 115–168; these read CAGC…CKED and CARC…CRLH. The segment at 250-270 is disordered; sequence DAEHLDRDQPYPSSQKTKRMR. A DNA-binding region (homeobox) is located at residues 266–325; the sequence is TKRMRTSFKHHQLRTMKSYFAINHNPDAKDLKQLAQKTGLTKRVLQVWFQNARAKFRRNL. Residues 307-323 carry the Nuclear localization signal motif; that stretch reads KRVLQVWFQNARAKFRR. Residues 328–356 are compositionally biased toward polar residues; it reads QENTGVDKSTDAALQTGTPSGPASELSNA. 2 disordered regions span residues 328–374 and 387–406; these read QENT…TSPT and GNLEGHEPHSPSQTTLTNLF. A compositionally biased stretch (low complexity) spans 357-374; the sequence is SLSPSSTPTTLTDLTSPT. Residues 396 to 406 show a composition bias toward polar residues; the sequence is SPSQTTLTNLF.

As to quaternary structure, interacts (via LIM domains) with CITED2. Interacts with POU4F2.

It localises to the nucleus. Functionally, acts as a transcriptional activator. Stimulates the promoter of the alpha-glycoprotein gene. Transcriptional regulatory protein involved in the control of cell differentiation in developing lymphoid and neural cell types. The protein is LIM/homeobox protein Lhx2 (LHX2) of Homo sapiens (Human).